Consider the following 75-residue polypeptide: Putative antitoxin VapB12 (75 aa).

Functionally, putative antitoxin component of a possible type II toxin-antitoxin (TA) system. The cognate toxin is VapC12. The sequence is that of Putative antitoxin VapB12 (vapB12) from Mycobacterium tuberculosis (strain CDC 1551 / Oshkosh).